The sequence spans 316 residues: MIKRDQSLATPYLQFDRTQWAALRDSVPLTLSEEEIVKLKGINEDLSLEEVAQIYLPLSRLLNFYISSNLRRQAVLEQFLGTDGQKIPYVIGIAGSVAVGKSTTARLLQALLSSWPEHRSVELITTDGFLHPNKVLNERGLMKKKGFPQSYDMHSLVKFVSEVKSGAKRVTAPVYSHLIYDVVPEGNKVIEQPDILILEGLNVLQSGMDYPHDPHRVFVSDFVDFSIYVDAPEELLQSWYINRFLKFRQGAFSNPDSYFHNYSKLPEPEAINIASQLWNEINGLNLQENILPTRERASLIMTKSANHAVENVRLRK.

95–102 (GSVAVGKS) lines the ATP pocket.

Belongs to the prokaryotic pantothenate kinase family.

Its subcellular location is the cytoplasm. It catalyses the reaction (R)-pantothenate + ATP = (R)-4'-phosphopantothenate + ADP + H(+). The protein operates within cofactor biosynthesis; coenzyme A biosynthesis; CoA from (R)-pantothenate: step 1/5. The protein is Pantothenate kinase of Serratia proteamaculans (strain 568).